The chain runs to 67 residues: DNA-directed RNA polymerase subunit Rpo10 (67 aa).

Residues C7, C10, C44, and C45 each contribute to the Zn(2+) site.

Belongs to the archaeal Rpo10/eukaryotic RPB10 RNA polymerase subunit family. In terms of assembly, part of the RNA polymerase complex. Requires Zn(2+) as cofactor.

It is found in the cytoplasm. The enzyme catalyses RNA(n) + a ribonucleoside 5'-triphosphate = RNA(n+1) + diphosphate. Functionally, DNA-dependent RNA polymerase (RNAP) catalyzes the transcription of DNA into RNA using the four ribonucleoside triphosphates as substrates. This Caldivirga maquilingensis (strain ATCC 700844 / DSM 13496 / JCM 10307 / IC-167) protein is DNA-directed RNA polymerase subunit Rpo10.